A 197-amino-acid chain; its full sequence is dTTP/UTP pyrophosphatase (197 aa).

Residue aspartate 70 is the Proton acceptor of the active site.

The protein belongs to the Maf family. YhdE subfamily. A divalent metal cation serves as cofactor.

Its subcellular location is the cytoplasm. It carries out the reaction dTTP + H2O = dTMP + diphosphate + H(+). The catalysed reaction is UTP + H2O = UMP + diphosphate + H(+). Nucleoside triphosphate pyrophosphatase that hydrolyzes dTTP and UTP. May have a dual role in cell division arrest and in preventing the incorporation of modified nucleotides into cellular nucleic acids. The sequence is that of dTTP/UTP pyrophosphatase from Methanosarcina barkeri (strain Fusaro / DSM 804).